Reading from the N-terminus, the 85-residue chain is U4-theraphotoxin-Hhn1l (85 aa).

An N-terminal signal peptide occupies residues 1 to 22 (MKVTLIAFLTCAAVLVLHTTAA). A propeptide spanning residues 23–48 (EELEAESQLMGVGMPDTELAAVDEER) is cleaved from the precursor. 3 disulfides stabilise this stretch: C52/C66, C56/C77, and C71/C82.

It belongs to the neurotoxin 12 (Hwtx-2) family. 02 (Hwtx-2) subfamily. In terms of tissue distribution, expressed by the venom gland.

It is found in the secreted. Functionally, postsynaptic neurotoxin. This Cyriopagopus hainanus (Chinese bird spider) protein is U4-theraphotoxin-Hhn1l.